Here is a 154-residue protein sequence, read N- to C-terminus: Protein X (154 aa).

The interval 68–117 (PCALRFTSARRMETTVNAHGNLPKVLHKRTLGLSAMSTTDLEAYFKDCVF) is mitochondrial targeting sequence.

It belongs to the orthohepadnavirus protein X family. In terms of assembly, may form homodimer. May interact with host CEBPA, CFLAR, CREB1, DDB1, E4F1, HBXIP, HSPD1/HSP60, NFKBIA, POLR2E and SMAD4. Interacts with host SMC5-SMC6 complex and induces its degradation. Interacts with host TRPC4AP; leading to prevent ubiquitination of TRPC4AP. Interacts with host PLSCR1; this interaction promotes ubiquitination and degradation of HBx and impairs HBx-mediated cell proliferation. Post-translationally, a fraction may be phosphorylated in insect cells and HepG2 cells, a human hepatoblastoma cell line. Phosphorylated in vitro by host protein kinase C or mitogen-activated protein kinase. N-acetylated in insect cells.

It is found in the host cytoplasm. Its subcellular location is the host nucleus. The protein resides in the host mitochondrion. In terms of biological role, multifunctional protein that plays a role in silencing host antiviral defenses and promoting viral transcription. Does not seem to be essential for HBV infection. May be directly involved in development of cirrhosis and liver cancer (hepatocellular carcinoma). Most of cytosolic activities involve modulation of cytosolic calcium. The effect on apoptosis is controversial depending on the cell types in which the studies have been conducted. May induce apoptosis by localizing in mitochondria and causing loss of mitochondrial membrane potential. May also modulate apoptosis by binding host CFLAR, a key regulator of the death-inducing signaling complex (DISC). Promotes viral transcription by using the host E3 ubiquitin ligase DDB1 to target the SMC5-SMC6 complex to proteasomal degradation. This host complex would otherwise bind to viral episomal DNA, and prevents its transcription. Moderately stimulates transcription of many different viral and cellular transcription elements. Promoters and enhancers stimulated by HBx contain DNA binding sites for NF-kappa-B, AP-1, AP-2, c-EBP, ATF/CREB, or the calcium-activated factor NF-AT. The sequence is that of Protein X from Hepatitis B virus genotype B/C subtype adw (isolate Okinawa/pODW282/1998) (HBV-B).